The sequence spans 344 residues: Methionine import ATP-binding protein MetN (344 aa).

Positions 2 to 241 constitute an ABC transporter domain; it reads IELQGLSQRF…PQHDVTRAMI (240 aa). 38–45 is an ATP binding site; it reads GRSGAGKS.

Belongs to the ABC transporter superfamily. Methionine importer (TC 3.A.1.24) family. In terms of assembly, the complex is composed of two ATP-binding proteins (MetN), two transmembrane proteins (MetI) and a solute-binding protein (MetQ).

The protein resides in the cell inner membrane. It catalyses the reaction L-methionine(out) + ATP + H2O = L-methionine(in) + ADP + phosphate + H(+). The catalysed reaction is D-methionine(out) + ATP + H2O = D-methionine(in) + ADP + phosphate + H(+). Part of the ABC transporter complex MetNIQ involved in methionine import. Responsible for energy coupling to the transport system. This Cupriavidus necator (strain ATCC 17699 / DSM 428 / KCTC 22496 / NCIMB 10442 / H16 / Stanier 337) (Ralstonia eutropha) protein is Methionine import ATP-binding protein MetN.